Consider the following 437-residue polypeptide: O-methyltransferase 10 (437 aa).

Positions 259, 282, 315, and 316 each coordinate S-adenosyl-L-methionine. His-335 acts as the Proton acceptor in catalysis.

It belongs to the class I-like SAM-binding methyltransferase superfamily. Cation-independent O-methyltransferase family. COMT subfamily.

It carries out the reaction (3,5-dichloro-2,4,6-trihydroxyphenyl)hexan-1-one + S-adenosyl-L-methionine = 1-(3,5-dichloro-2,6-dihydroxy-4-methoxyphenyl)hexan-1-one + S-adenosyl-L-homocysteine + H(+). The sequence is that of O-methyltransferase 10 (omt10) from Dictyostelium discoideum (Social amoeba).